A 218-amino-acid polypeptide reads, in one-letter code: Cytochrome c biogenesis ATP-binding export protein CcmA (218 aa).

In terms of domain architecture, ABC transporter spans 2–217; the sequence is LEAKNLTCIR…KSCLSACCAV (216 aa). 34–41 provides a ligand contact to ATP; the sequence is GPNGAGKT.

Belongs to the ABC transporter superfamily. CcmA exporter (TC 3.A.1.107) family. As to quaternary structure, the complex is composed of two ATP-binding proteins (CcmA) and two transmembrane proteins (CcmB).

The protein localises to the cell inner membrane. It catalyses the reaction heme b(in) + ATP + H2O = heme b(out) + ADP + phosphate + H(+). Functionally, part of the ABC transporter complex CcmAB involved in the biogenesis of c-type cytochromes; once thought to export heme, this seems not to be the case, but its exact role is uncertain. Responsible for energy coupling to the transport system. This is Cytochrome c biogenesis ATP-binding export protein CcmA from Yersinia pseudotuberculosis serotype I (strain IP32953).